The sequence spans 123 residues: Small ribosomal subunit protein uS12 (123 aa).

Asp89 carries the 3-methylthioaspartic acid modification.

This sequence belongs to the universal ribosomal protein uS12 family. Part of the 30S ribosomal subunit. Contacts proteins S8 and S17. May interact with IF1 in the 30S initiation complex.

Functionally, with S4 and S5 plays an important role in translational accuracy. Interacts with and stabilizes bases of the 16S rRNA that are involved in tRNA selection in the A site and with the mRNA backbone. Located at the interface of the 30S and 50S subunits, it traverses the body of the 30S subunit contacting proteins on the other side and probably holding the rRNA structure together. The combined cluster of proteins S8, S12 and S17 appears to hold together the shoulder and platform of the 30S subunit. The protein is Small ribosomal subunit protein uS12 of Gluconobacter oxydans (strain 621H) (Gluconobacter suboxydans).